Here is a 436-residue protein sequence, read N- to C-terminus: Trigger factor (436 aa).

Residues Gly-163–Pro-248 enclose the PPIase FKBP-type domain.

This sequence belongs to the FKBP-type PPIase family. Tig subfamily.

It is found in the cytoplasm. The enzyme catalyses [protein]-peptidylproline (omega=180) = [protein]-peptidylproline (omega=0). Involved in protein export. Acts as a chaperone by maintaining the newly synthesized protein in an open conformation. Functions as a peptidyl-prolyl cis-trans isomerase. The sequence is that of Trigger factor from Bordetella pertussis (strain Tohama I / ATCC BAA-589 / NCTC 13251).